The primary structure comprises 480 residues: Cytochrome b-c1 complex subunit 1, mitochondrial (480 aa).

The N-terminal 34 residues, 1–34, are a transit peptide targeting the mitochondrion; that stretch reads MAASAVCRAACSGTQVLLRTRRSPALLRLPALRG. An N6-acetyllysine mark is found at lysine 111 and lysine 138. Lysine 163 is subject to N6-acetyllysine; alternate. Lysine 163 carries the post-translational modification N6-succinyllysine; alternate. At serine 212 the chain carries Phosphoserine. Threonine 214 carries the phosphothreonine modification. N6-acetyllysine is present on lysine 248.

This sequence belongs to the peptidase M16 family. UQCRC1/QCR1 subfamily. In terms of assembly, component of the ubiquinol-cytochrome c oxidoreductase (cytochrome b-c1 complex, complex III, CIII), a multisubunit enzyme composed of 11 subunits. The complex is composed of 3 respiratory subunits cytochrome b, cytochrome c1 and Rieske protein UQCRFS1, 2 core protein subunits UQCRC1/QCR1 and UQCRC2/QCR2, and 6 low-molecular weight protein subunits UQCRH/QCR6, UQCRB/QCR7, UQCRQ/QCR8, UQCR10/QCR9, UQCR11/QCR10 and subunit 9, the cleavage product of Rieske protein UQCRFS1. The complex exists as an obligatory dimer and forms supercomplexes (SCs) in the inner mitochondrial membrane with NADH-ubiquinone oxidoreductase (complex I, CI) and cytochrome c oxidase (complex IV, CIV), resulting in different assemblies (supercomplex SCI(1)III(2)IV(1) and megacomplex MCI(2)III(2)IV(2)). Interacts with UQCC6. Interacts with STMP1. Post-translationally, acetylation of Lys-138 is observed in liver mitochondria from fasted mice but not from fed mice. As to expression, expressed in neurons and astrocytes of the cerebral cortex and hippocampus (at protein level).

Its subcellular location is the mitochondrion inner membrane. Functionally, component of the ubiquinol-cytochrome c oxidoreductase, a multisubunit transmembrane complex that is part of the mitochondrial electron transport chain which drives oxidative phosphorylation. The respiratory chain contains 3 multisubunit complexes succinate dehydrogenase (complex II, CII), ubiquinol-cytochrome c oxidoreductase (cytochrome b-c1 complex, complex III, CIII) and cytochrome c oxidase (complex IV, CIV), that cooperate to transfer electrons derived from NADH and succinate to molecular oxygen, creating an electrochemical gradient over the inner membrane that drives transmembrane transport and the ATP synthase. The cytochrome b-c1 complex catalyzes electron transfer from ubiquinol to cytochrome c, linking this redox reaction to translocation of protons across the mitochondrial inner membrane, with protons being carried across the membrane as hydrogens on the quinol. In the process called Q cycle, 2 protons are consumed from the matrix, 4 protons are released into the intermembrane space and 2 electrons are passed to cytochrome c. The 2 core subunits UQCRC1/QCR1 and UQCRC2/QCR2 are homologous to the 2 mitochondrial-processing peptidase (MPP) subunits beta-MPP and alpha-MPP respectively, and they seem to have preserved their MPP processing properties. May be involved in the in situ processing of UQCRFS1 into the mature Rieske protein and its mitochondrial targeting sequence (MTS)/subunit 9 when incorporated into complex III. Seems to play an important role in the maintenance of proper mitochondrial function in nigral dopaminergic neurons. This chain is Cytochrome b-c1 complex subunit 1, mitochondrial (Uqcrc1), found in Mus musculus (Mouse).